The following is a 213-amino-acid chain: Glutathione S-transferase DHAR1, mitochondrial (213 aa).

Glutathione-binding residues include Lys8 and Asp19. L-ascorbate is bound by residues Lys8 and Asp19. Residues 10-83 (AVGAPDHLGD…DVIVGILEEK (74 aa)) enclose the GST N-terminal domain. Cys20 serves as the catalytic Nucleophile. Cys20 carries the post-translational modification S-glutathionyl cysteine. The Glutathione-binding signature appears at 20-25 (CPFSQR). 3 residues coordinate glutathione: Lys47, Val60, and Ser73. One can recognise a GST C-terminal domain in the interval 84-213 (YPDPPLKTPA…ISGWAPKVNP (130 aa)). Residues 133 to 137 (HLKSH) carry the Copper-binding motif. The glutathione site is built by His160 and Trp207. Lys210 lines the L-ascorbate pocket.

It belongs to the GST superfamily. DHAR family. Monomer. Interacts with copper (Cu). Post-translationally, spontaneous S-glutathionylation in the presence of oxidized glutathione (GSSG). In terms of tissue distribution, expressed at least in roots and leaves.

The protein resides in the mitochondrion. It is found in the cytoplasm. The protein localises to the cytosol. It localises to the peroxisome. Its subcellular location is the membrane. The enzyme catalyses RX + glutathione = an S-substituted glutathione + a halide anion + H(+). It catalyses the reaction L-dehydroascorbate + 2 glutathione = glutathione disulfide + L-ascorbate. Displays a dual function. As a soluble protein, exhibits glutathione-dependent thiol transferase and dehydroascorbate (DHA) reductase activities. Key component of the ascorbate recycling system. Involved in the redox homeostasis, especially in scavenging of ROS under oxidative stresses, subsequently to biotic or abiotic inducers. As a peripheral membrane protein, could also function as voltage-gated ion channel. This Arabidopsis thaliana (Mouse-ear cress) protein is Glutathione S-transferase DHAR1, mitochondrial.